The primary structure comprises 67 residues: Large ribosomal subunit protein bL35 (67 aa).

This sequence belongs to the bacterial ribosomal protein bL35 family.

The sequence is that of Large ribosomal subunit protein bL35 from Picosynechococcus sp. (strain ATCC 27264 / PCC 7002 / PR-6) (Agmenellum quadruplicatum).